The sequence spans 462 residues: Metal cation symporter ZIP14 (462 aa).

The N-terminal stretch at 1 to 16 is a signal peptide; the sequence is MPLLLLSALLPFSLMA. The Extracellular segment spans residues 17–138; the sequence is GPTPSTGKEL…PSPGEVWGYG (122 aa). 4 N-linked (GlcNAc...) asparagine glycosylation sites follow: Asn42, Asn68, Asn83, and Asn119. Residues 139-159 form a helical membrane-spanning segment; sequence FLCVTVISLCSLFGAGVVPFM. Residues 160–167 are Cytoplasmic-facing; sequence KKACYKRL. A helical transmembrane segment spans residues 168-188; sequence LLFCIALAIGTLFSNALFQLI. The Extracellular segment spans residues 189–201; sequence PEAFGFNPLEDSY. A helical membrane pass occupies residues 202–222; sequence VFTSSVIFGGFYLFFFTEKVL. The Cytoplasmic portion of the chain corresponds to 223–322; sequence KMMLKQKHEH…SDGLHNFIDG (100 aa). The HHHGHXHX-motif motif lies at 230 to 237; the sequence is HEHGHSHY. Residues 235 to 285 are disordered; sequence SHYSADTSKRDAEEGVTEKLQNGDLDHMIPPPHGSESDLRGDEKAVQQQDL. 2 stretches are compositionally biased toward basic and acidic residues: residues 241–251 and 269–279; these read TSKRDAEEGVT and SESDLRGDEKA. Residues 323-343 traverse the membrane as a helical segment; sequence LAIGASFTVSVFQGVSTSIAI. At 344 to 367 the chain is on the extracellular side; sequence LCEEFPHELGDFVILLNAGMSIPQ. Residues 346–351 carry the XEXPHE-motif motif; sequence EEFPHE. Residues 368-388 form a helical membrane-spanning segment; it reads ALFFNFLSACCCYLGLAFGIL. Residues 389–396 are Cytoplasmic-facing; that stretch reads AGSHFSSN. Residues 397–417 form a helical membrane-spanning segment; it reads WIFALAGGMFLYIALSDMFPE. Residues 418-431 are Extracellular-facing; that stretch reads MNEVSKEDEEGGRA. A helical membrane pass occupies residues 432–452; sequence FSAFMIQNAGLLTGFAIMLLL. The Cytoplasmic portion of the chain corresponds to 453–462; the sequence is TTFSGQIQLG.

Belongs to the ZIP transporter (TC 2.A.5) family. In terms of assembly, homotrimer.

Its subcellular location is the cell membrane. It is found in the apical cell membrane. The protein resides in the basolateral cell membrane. It localises to the early endosome membrane. The protein localises to the late endosome membrane. Its subcellular location is the lysosome membrane. The catalysed reaction is Zn(2+)(out) + 2 hydrogencarbonate(out) = Zn(2+)(in) + 2 hydrogencarbonate(in). The enzyme catalyses Mn(2+)(out) + 2 hydrogencarbonate(out) = Mn(2+)(in) + 2 hydrogencarbonate(in). It carries out the reaction Fe(2+)(out) + 2 hydrogencarbonate(out) = Fe(2+)(in) + 2 hydrogencarbonate(in). It catalyses the reaction Cd(2+)(out) + 2 hydrogencarbonate(out) = Cd(2+)(in) + 2 hydrogencarbonate(in). Electroneutral transporter of the plasma membrane mediating the cellular uptake of the divalent metal cations zinc, manganese and iron that are important for tissue homeostasis, metabolism, development and immunity. Functions as an energy-dependent symporter, transporting through the membranes an electroneutral complex composed of a divalent metal cation and two bicarbonate anions. Beside these endogenous cellular substrates, can also import cadmium a non-essential metal which is cytotoxic and carcinogenic. The sequence is that of Metal cation symporter ZIP14 from Xenopus tropicalis (Western clawed frog).